A 514-amino-acid chain; its full sequence is MDNRTLFEMRSIVKAFSGVRALDGVSLAVRPGECVGLCGENGAGKSTLMKVLSGVYPYGTYEGEILWDGAPLRAHSVRDSEHAGIVIIHQELMLVQQLSVAENIFLGNEITKPGGRMDYDAMHRKAEELLARLRLTDVNVAAPVMNYGSGHQQLFEIAKALAKNARLLILDEPTSSLSAKEIEVLLSIIEDLKRGGVACVYISHKLDEVKRVCDTITVIRDGKHIGTRPAAELDINGIITMMVGREMTSLFPKVEHTVGDVVLEARNVTCWDVTNPNRKRVDDVSFSVRRGEILGVAGLVGAGRTEMVSALFGAYPGRSSAQVLVEGKPVKVHSPAQAIAHGICLVPEDRKRHGIVPLMGVGENITLATLAQYARGLRVDKGAELMTVDREIKRLRIKTASPALSIASLSGGNQQKAVLTKMVLACPKVLILDEPTRGVDVGSKYDIYQMIADLAASGVAIIMVSSELPEILGMSDRVLVIGEGELRGDFANQGLTQERILAAAIHAEPRLRAA.

ABC transporter domains are found at residues 7–246 (FEMR…VGRE) and 263–508 (LEAR…IHAE). 39-46 (GENGAGKS) lines the ATP pocket.

This sequence belongs to the ABC transporter superfamily. Xylose importer (TC 3.A.1.2.4) family. As to quaternary structure, the complex is composed of two ATP-binding proteins (XylG), two transmembrane proteins (XylH) and a solute-binding protein (XylF).

Its subcellular location is the cell inner membrane. It carries out the reaction D-xylose(out) + ATP + H2O = D-xylose(in) + ADP + phosphate + H(+). Its function is as follows. Part of the ABC transporter complex XylFGH involved in xylose import. Responsible for energy coupling to the transport system. This chain is Xylose import ATP-binding protein XylG, found in Ralstonia nicotianae (strain ATCC BAA-1114 / GMI1000) (Ralstonia solanacearum).